The primary structure comprises 255 residues: U2 small nuclear ribonucleoprotein A' (255 aa).

LRR repeat units lie at residues 20-41 (RDRE…GATL), 43-64 (QFDA…PLLR), 65-86 (RLKT…LDQA), and 89-110 (CLTE…DPLA). Positions 123 to 161 (NPVTNKKHYRLYVIYKVPQVRVLDFQKVKLKERQEAEKM) constitute an LRRCT domain. N6-acetyllysine; alternate is present on Lys172. Lys172 is covalently cross-linked (Glycyl lysine isopeptide (Lys-Gly) (interchain with G-Cter in SUMO2); alternate). The disordered stretch occupies residues 174 to 201 (IARRSKTFNPGAGLPTDKKKGGPSPGDV). Phosphoserine is present on residues Ser178 and Ser197. Residue Lys221 forms a Glycyl lysine isopeptide (Lys-Gly) (interchain with G-Cter in SUMO2) linkage. The interval 222–255 (GLLQSGQIPGRERRSGPTDDGEEEMEEDTVTNGS) is disordered. Phosphoserine is present on residues Ser236 and Ser255. Over residues 240 to 255 (DDGEEEMEEDTVTNGS) the composition is skewed to acidic residues.

The protein belongs to the U2 small nuclear ribonucleoprotein A family. As to quaternary structure, identified in the spliceosome B complex. Identified in the spliceosome C complex. Found in a pre-mRNA splicing complex with SFRS4, SFRS5, SNRNP70, SNRPA1, SRRM1 and SRRM2. Found in a pre-mRNA exonic splicing enhancer (ESE) complex with SNRNP70, SNRPA1, SRRM1 and TRA2B. Contributes to the binding of stem loop IV of U2 snRNA with SNRPB2.

It is found in the nucleus. Involved in pre-mRNA splicing as component of the spliceosome. Associated with sn-RNP U2, where it contributes to the binding of stem loop IV of U2 snRNA. The polypeptide is U2 small nuclear ribonucleoprotein A' (SNRPA1) (Homo sapiens (Human)).